Reading from the N-terminus, the 227-residue chain is Phosphoribosylformylglycinamidine synthase subunit PurQ (227 aa).

In terms of domain architecture, Glutamine amidotransferase type-1 spans 3-225 (FAVIVFPGSN…LKQWRETYVV (223 aa)). Catalysis depends on C86, which acts as the Nucleophile. Active-site residues include H194 and E196.

In terms of assembly, part of the FGAM synthase complex composed of 1 PurL, 1 PurQ and 2 PurS subunits.

Its subcellular location is the cytoplasm. The catalysed reaction is N(2)-formyl-N(1)-(5-phospho-beta-D-ribosyl)glycinamide + L-glutamine + ATP + H2O = 2-formamido-N(1)-(5-O-phospho-beta-D-ribosyl)acetamidine + L-glutamate + ADP + phosphate + H(+). It catalyses the reaction L-glutamine + H2O = L-glutamate + NH4(+). Its pathway is purine metabolism; IMP biosynthesis via de novo pathway; 5-amino-1-(5-phospho-D-ribosyl)imidazole from N(2)-formyl-N(1)-(5-phospho-D-ribosyl)glycinamide: step 1/2. Part of the phosphoribosylformylglycinamidine synthase complex involved in the purines biosynthetic pathway. Catalyzes the ATP-dependent conversion of formylglycinamide ribonucleotide (FGAR) and glutamine to yield formylglycinamidine ribonucleotide (FGAM) and glutamate. The FGAM synthase complex is composed of three subunits. PurQ produces an ammonia molecule by converting glutamine to glutamate. PurL transfers the ammonia molecule to FGAR to form FGAM in an ATP-dependent manner. PurS interacts with PurQ and PurL and is thought to assist in the transfer of the ammonia molecule from PurQ to PurL. The chain is Phosphoribosylformylglycinamidine synthase subunit PurQ from Bacillus cereus (strain Q1).